A 229-amino-acid polypeptide reads, in one-letter code: Enolase-phosphatase E1 (229 aa).

It belongs to the HAD-like hydrolase superfamily. MasA/MtnC family. As to quaternary structure, monomer. Mg(2+) is required as a cofactor.

The catalysed reaction is 5-methylsulfanyl-2,3-dioxopentyl phosphate + H2O = 1,2-dihydroxy-5-(methylsulfanyl)pent-1-en-3-one + phosphate. It functions in the pathway amino-acid biosynthesis; L-methionine biosynthesis via salvage pathway; L-methionine from S-methyl-5-thio-alpha-D-ribose 1-phosphate: step 3/6. The protein operates within amino-acid biosynthesis; L-methionine biosynthesis via salvage pathway; L-methionine from S-methyl-5-thio-alpha-D-ribose 1-phosphate: step 4/6. Functionally, bifunctional enzyme that catalyzes the enolization of 2,3-diketo-5-methylthiopentyl-1-phosphate (DK-MTP-1-P) into the intermediate 2-hydroxy-3-keto-5-methylthiopentenyl-1-phosphate (HK-MTPenyl-1-P), which is then dephosphorylated to form the acireductone 1,2-dihydroxy-3-keto-5-methylthiopentene (DHK-MTPene). This Serratia proteamaculans (strain 568) protein is Enolase-phosphatase E1.